The primary structure comprises 568 residues: Peroxisomal leader peptide-processing protease (568 aa).

The segment at threonine 332 to leucine 568 is serine protease. Catalysis depends on charge relay system residues histidine 374, aspartate 410, and serine 483.

Belongs to the peptidase S1B family. As to quaternary structure, homodimer. Forms a heterodimer with the C-terminal cleavage product (49 kDa form). Forms a heterodimer with the N-terminal cleavage product (10 kDa form). Interacts with PEX5. Interacts with LONP2. In terms of processing, self-cleavage gives rise to an N-terminal 10-kDa fragment and C-terminal 49-kDa fragment upon import into the peroxisomes. The full-lengh TYSND1 is the active the proteolytic processing of PTS1- and PTS2-proteins and in self-cleavage, and intermolecular self-cleavage of TYSND1 down-regulates its protease activity.

The protein localises to the peroxisome. With respect to regulation, inhibited by N-ethylmaleimide (NEM). Not affected by leupeptin or trans-epoxysuccinyl-l-leucylamido-(4-gianidino) butane (E64). Its function is as follows. Peroxisomal protease that mediates both the removal of the leader peptide from proteins containing a PTS2 target sequence and processes several PTS1-containing proteins. Catalyzes the processing of PTS1-proteins involved in the peroxisomal beta-oxidation of fatty acids. The chain is Peroxisomal leader peptide-processing protease (Tysnd1) from Mus musculus (Mouse).